Reading from the N-terminus, the 62-residue chain is Snaclec aspercetin subunit alpha (62 aa).

A disulfide bridge connects residues cysteine 2 and cysteine 13. Positions 9–62 (YEGHCYRFFHPPKDWADAERFCTEQAKGGALVSIQRFGEEDFVSNLITKNLQRG) constitute a C-type lectin domain.

This sequence belongs to the snaclec family. Heterodimer; disulfide-linked. In terms of tissue distribution, expressed by the venom gland.

It localises to the secreted. Functionally, snaclec that binds to von Willebrand factor (VWF) and induces its interaction with GPIbalpha (GP1BA) (via the vWF A1 domain), resulting in platelet aggregation. Intravenous injection in mice induces a dose-dependent drop in platelet count (thrombocytopenia). Pretreatment by intravenous injection by this protein in mice potentiates the hemorrhagic lesion in the skin provoked by the metalloproteinase BaP1 intradermally injected. This result is not observed when both BaP1 and this protein are injected simultaneously. This is Snaclec aspercetin subunit alpha from Bothrops asper (Terciopelo).